The following is a 188-amino-acid chain: dCTP deaminase (188 aa).

DCTP-binding positions include 111–116, 135–137, Q156, Y170, and Q180; these read KSTYAR and TLE. Catalysis depends on E137, which acts as the Proton donor/acceptor.

Belongs to the dCTP deaminase family. In terms of assembly, homotrimer.

It carries out the reaction dCTP + H2O + H(+) = dUTP + NH4(+). The protein operates within pyrimidine metabolism; dUMP biosynthesis; dUMP from dCTP (dUTP route): step 1/2. Catalyzes the deamination of dCTP to dUTP. This is dCTP deaminase from Laribacter hongkongensis (strain HLHK9).